The chain runs to 171 residues: Large ribosomal subunit protein bL9 (171 aa).

It belongs to the bacterial ribosomal protein bL9 family.

Functionally, binds to the 23S rRNA. This is Large ribosomal subunit protein bL9 from Rickettsia rickettsii (strain Iowa).